Reading from the N-terminus, the 441-residue chain is Xaa-Pro dipeptidase (441 aa).

Residues aspartate 244, aspartate 255, histidine 336, glutamate 381, and glutamate 420 each coordinate Mn(2+).

It belongs to the peptidase M24B family. Bacterial-type prolidase subfamily. Mn(2+) is required as a cofactor.

The enzyme catalyses Xaa-L-Pro dipeptide + H2O = an L-alpha-amino acid + L-proline. Splits dipeptides with a prolyl residue in the C-terminal position. The chain is Xaa-Pro dipeptidase from Xanthomonas axonopodis pv. citri (strain 306).